The primary structure comprises 141 residues: Nucleoside diphosphate kinase (141 aa).

ATP-binding residues include Lys-11, Phe-59, Arg-87, Thr-93, Arg-104, and Asn-114. His-117 (pros-phosphohistidine intermediate) is an active-site residue.

It belongs to the NDK family. Homotetramer. Mg(2+) serves as cofactor.

The protein localises to the cytoplasm. The enzyme catalyses a 2'-deoxyribonucleoside 5'-diphosphate + ATP = a 2'-deoxyribonucleoside 5'-triphosphate + ADP. It catalyses the reaction a ribonucleoside 5'-diphosphate + ATP = a ribonucleoside 5'-triphosphate + ADP. In terms of biological role, major role in the synthesis of nucleoside triphosphates other than ATP. The ATP gamma phosphate is transferred to the NDP beta phosphate via a ping-pong mechanism, using a phosphorylated active-site intermediate. This chain is Nucleoside diphosphate kinase, found in Xanthomonas axonopodis pv. citri (strain 306).